A 253-amino-acid chain; its full sequence is Bridging integrator 3 (253 aa).

The BAR domain occupies 9–232; the sequence is GQPKKQIVSK…LDQPGHSDEH (224 aa). 2 coiled-coil regions span residues 16-57 and 120-151; these read VSKT…AMSK and SLNMAVKRREQALQDYGRLQAKVEKYEEKEKT.

The protein resides in the cytoplasm. Its subcellular location is the cytoskeleton. Involved in cytokinesis and septation where it has a role in the localization of F-actin. The polypeptide is Bridging integrator 3 (Bin3) (Rattus norvegicus (Rat)).